The primary structure comprises 458 residues: ATP synthase subunit beta (458 aa).

148–155 (GGAGVGKT) serves as a coordination point for ATP.

The protein belongs to the ATPase alpha/beta chains family. As to quaternary structure, F-type ATPases have 2 components, CF(1) - the catalytic core - and CF(0) - the membrane proton channel. CF(1) has five subunits: alpha(3), beta(3), gamma(1), delta(1), epsilon(1). CF(0) has three main subunits: a(1), b(2) and c(9-12). The alpha and beta chains form an alternating ring which encloses part of the gamma chain. CF(1) is attached to CF(0) by a central stalk formed by the gamma and epsilon chains, while a peripheral stalk is formed by the delta and b chains.

The protein localises to the cell inner membrane. It catalyses the reaction ATP + H2O + 4 H(+)(in) = ADP + phosphate + 5 H(+)(out). Functionally, produces ATP from ADP in the presence of a proton gradient across the membrane. The catalytic sites are hosted primarily by the beta subunits. The protein is ATP synthase subunit beta of Pseudomonas fluorescens (strain Pf0-1).